A 214-amino-acid polypeptide reads, in one-letter code: Probable nicotinate-nucleotide adenylyltransferase (214 aa).

Belongs to the NadD family.

The catalysed reaction is nicotinate beta-D-ribonucleotide + ATP + H(+) = deamido-NAD(+) + diphosphate. It functions in the pathway cofactor biosynthesis; NAD(+) biosynthesis; deamido-NAD(+) from nicotinate D-ribonucleotide: step 1/1. Catalyzes the reversible adenylation of nicotinate mononucleotide (NaMN) to nicotinic acid adenine dinucleotide (NaAD). This chain is Probable nicotinate-nucleotide adenylyltransferase, found in Aeromonas salmonicida (strain A449).